Reading from the N-terminus, the 469-residue chain is Tetratricopeptide repeat protein 38 (469 aa).

A2 carries the N-acetylalanine modification. Position 5 is a phosphoserine (S5). TPR repeat units follow at residues 108–141, 180–213, and 252–285; these read REQL…HPTD, SYVK…NPTD, and CHNY…SLQA.

It belongs to the TTC38 family.

This Homo sapiens (Human) protein is Tetratricopeptide repeat protein 38 (TTC38).